The following is a 76-amino-acid chain: Putative Fe(2+) transport protein A (76 aa).

Belongs to the FeoA family.

Its function is as follows. Might be involved in Fe(2+) ion uptake. The chain is Putative Fe(2+) transport protein A from Helicobacter pylori (strain ATCC 700392 / 26695) (Campylobacter pylori).